A 443-amino-acid chain; its full sequence is Thymidine phosphorylase (443 aa).

Belongs to the thymidine/pyrimidine-nucleoside phosphorylase family. Homodimer.

It catalyses the reaction thymidine + phosphate = 2-deoxy-alpha-D-ribose 1-phosphate + thymine. The protein operates within pyrimidine metabolism; dTMP biosynthesis via salvage pathway; dTMP from thymine: step 1/2. Functionally, the enzymes which catalyze the reversible phosphorolysis of pyrimidine nucleosides are involved in the degradation of these compounds and in their utilization as carbon and energy sources, or in the rescue of pyrimidine bases for nucleotide synthesis. This chain is Thymidine phosphorylase, found in Shewanella sp. (strain ANA-3).